The following is a 241-amino-acid chain: Homeobox protein TGIF2LX (241 aa).

Disordered stretches follow at residues 1 to 58 (MEAA…GNLP) and 127 to 207 (GKGA…ELVS). Positions 10 to 39 (ETQSPVQKDSPAKTQSPAQDTSIMSRNNAD) are enriched in polar residues. Positions 48 to 111 (EHKKKRKGNL…INARRRILPD (64 aa)) form a DNA-binding region, homeobox; TALE-type.

The protein belongs to the TALE/TGIF homeobox family.

It localises to the nucleus. May have a transcription role in testis. In Pan paniscus (Pygmy chimpanzee), this protein is Homeobox protein TGIF2LX (TGIF2LX).